We begin with the raw amino-acid sequence, 467 residues long: Acetaldehyde dehydrogenase (acetylating) EutE (467 aa).

Residues 1-19 (MNQQDIEQVVKAVLLKMKD) form a targets protein to the BMC region.

This sequence belongs to the EutE/PduP family. As to quaternary structure, interacts with EutS, which targets it to the interior of the BMC.

Its subcellular location is the bacterial microcompartment. The enzyme catalyses acetaldehyde + NAD(+) + CoA = acetyl-CoA + NADH + H(+). It participates in amine and polyamine degradation; ethanolamine degradation. Acts as the second step in ethanolamine degradation by converting acetaldehyde into acetyl-CoA. Has a very strong preference for NAD(+) over NADP(+) in both catalytic directions. May play a role in bacterial microcompartment (BMC) assembly or maintenance. Directly targeted to the BMC. In terms of biological role, expression of the eut operon allows this bacteria to use ethanolamine (EA) as a carbon, nitrogen and energy source. It relies on cobalamin (vitamin B12) both as a cofactor for the ethanolamine ammonia-lyase (EAL) activity and to induce the operon. EA enhances bacterial survival in macrophages in a concentration-dependent manner, suggesting it is an important nutrient during infection. This Salmonella typhimurium (strain LT2 / SGSC1412 / ATCC 700720) protein is Acetaldehyde dehydrogenase (acetylating) EutE.